Reading from the N-terminus, the 244-residue chain is Cell division protein ZapD (244 aa).

Belongs to the ZapD family. Interacts with FtsZ.

The protein localises to the cytoplasm. Its function is as follows. Cell division factor that enhances FtsZ-ring assembly. Directly interacts with FtsZ and promotes bundling of FtsZ protofilaments, with a reduction in FtsZ GTPase activity. The protein is Cell division protein ZapD of Shewanella baltica (strain OS223).